Consider the following 102-residue polypeptide: Iron-sulfur cluster assembly protein CyaY (102 aa).

The protein belongs to the frataxin family.

Functionally, involved in iron-sulfur (Fe-S) cluster assembly. May act as a regulator of Fe-S biogenesis. In Actinobacillus succinogenes (strain ATCC 55618 / DSM 22257 / CCUG 43843 / 130Z), this protein is Iron-sulfur cluster assembly protein CyaY.